The sequence spans 705 residues: Polyribonucleotide nucleotidyltransferase (705 aa).

Positions 487 and 493 each coordinate Mg(2+). The 60-residue stretch at 554-613 (PKILTMTINPDKIRDVIGPSGKQINKIIEETGVKIDIEQDGTIFISSTDESGNQKAKKII) folds into the KH domain. An S1 motif domain is found at 623 to 691 (GQLYLGKVKR…KQGRVNLSRK (69 aa)).

It belongs to the polyribonucleotide nucleotidyltransferase family. Homodimer. Component of a possible RNA degradosome complex composed of rny, rnjA, rnjB, pnp, pfkA and eno (although rnjA and rnjB's presence is unclear). RNA helicase CshA may also be a member of this complex. The cofactor is Mg(2+).

It localises to the cytoplasm. It catalyses the reaction RNA(n+1) + phosphate = RNA(n) + a ribonucleoside 5'-diphosphate. Its function is as follows. Involved in mRNA degradation. Catalyzes the phosphorolysis of single-stranded polyribonucleotides processively in the 3'- to 5'-direction. Necessary for competence development in Bacillus subtilis. May be necessary for modification of the srfA transcript (stabilization or translation activation). Involved in processing precursor type I toxin-antitoxin RNAs antitoxin SR4 and SR5 RNAs to their mature forms. The polypeptide is Polyribonucleotide nucleotidyltransferase (Bacillus subtilis (strain 168)).